The chain runs to 99 residues: MTVFVDHKIEYMSLEDDAELLKTMAHPMRLKIVNELYKHKALNVTQIIQILKLPQSTVSQHLCKMRGKVLKRNRQGLEIYYSINNPKVEGIIKLLNPIQ.

Residues isoleucine 9–glutamine 99 enclose the HTH arsR-type domain. Residues asparagine 43–leucine 62 constitute a DNA-binding region (H-T-H motif).

In terms of biological role, represses the expression of the pagA and atxA genes. The sequence is that of Transcriptional repressor PagR (pagR) from Bacillus anthracis.